Reading from the N-terminus, the 338-residue chain is Electron transfer flavoprotein subunit alpha (338 aa).

275 to 303 (IYIACAISGAIQPLAGMTGSDCIIAINKD) contacts FAD.

Belongs to the ETF alpha-subunit/FixB family. As to quaternary structure, heterodimer of an alpha and a beta subunit. It depends on FAD as a cofactor.

In terms of biological role, the electron transfer flavoprotein serves as a specific electron acceptor for other dehydrogenases. It transfers the electrons to the main respiratory chain via ETF-ubiquinone oxidoreductase (ETF dehydrogenase). The polypeptide is Electron transfer flavoprotein subunit alpha (etfA) (Megasphaera elsdenii).